Here is a 388-residue protein sequence, read N- to C-terminus: 1-deoxy-D-xylulose 5-phosphate reductoisomerase (388 aa).

T10, G11, T12, I13, R37, Q38, and N122 together coordinate NADPH. K123 lines the 1-deoxy-D-xylulose 5-phosphate pocket. Residue E124 participates in NADPH binding. Mn(2+) is bound at residue D148. Residues S149, E150, S179, and H202 each coordinate 1-deoxy-D-xylulose 5-phosphate. Residue E150 coordinates Mn(2+). G208 is a binding site for NADPH. 1-deoxy-D-xylulose 5-phosphate contacts are provided by S215, N220, K221, and E224. E224 is a binding site for Mn(2+).

It belongs to the DXR family. Mg(2+) is required as a cofactor. Requires Mn(2+) as cofactor.

It carries out the reaction 2-C-methyl-D-erythritol 4-phosphate + NADP(+) = 1-deoxy-D-xylulose 5-phosphate + NADPH + H(+). It functions in the pathway isoprenoid biosynthesis; isopentenyl diphosphate biosynthesis via DXP pathway; isopentenyl diphosphate from 1-deoxy-D-xylulose 5-phosphate: step 1/6. Its function is as follows. Catalyzes the NADPH-dependent rearrangement and reduction of 1-deoxy-D-xylulose-5-phosphate (DXP) to 2-C-methyl-D-erythritol 4-phosphate (MEP). The protein is 1-deoxy-D-xylulose 5-phosphate reductoisomerase of Laribacter hongkongensis (strain HLHK9).